Here is a 440-residue protein sequence, read N- to C-terminus: MPIPPPPPPPPGPPPPPTFHQANTEQPKLSRDEQRGRGALLQDICKGTKLKKVTNINDRSAPILEKPKGSSGGYGSGGAALQPKGGLFQGGVLKLRPVGAKDGSENLAGKPALQIPSSRAAAPRPPVSAASGRPQDDTDSSRASLPELPRMQRPSLPDLSRPNTTSSTGMKHSSSAPPPPPPGRRANAPPTPLPMHSSKAPAYNREKPLPPTPGQRLHPGREGPPAPPPVKPPPSPVNIRTGPSGQSLAPPPPPYRQPPGVPNGPSSPTNESAPELPQRHNSLHRKTPGPVRGLAPPPPTSASPSLLSNRPPPPARDPPSRGAAPPPPPPVIRNGARDAPPPPPPYRMHGSEPPSRGKPPPPPSRTPAGPPPPPPPPLRNGHRDSITTVRSFLDDFESKYSFHPVEDFPAPEEYKHFQRIYPSKTNRAARGAPPLPPILR.

The span at 1–18 (MPIPPPPPPPPGPPPPPT) shows a compositional bias: pro residues. The tract at residues 1–36 (MPIPPPPPPPPGPPPPPTFHQANTEQPKLSRDEQRG) is disordered. The WH2 domain occupies 36 to 53 (GRGALLQDICKGTKLKKV). Residue arginine 37 is modified to Asymmetric dimethylarginine. The segment at 49-52 (KLKK) is binds actin. Disordered stretches follow at residues 56–387 (INDR…DSIT) and 419–440 (RIYPSKTNRAARGAPPLPPILR). Residues 116 to 133 (PSSRAAAPRPPVSAASGR) show a composition bias toward low complexity. The span at 161–172 (RPNTTSSTGMKH) shows a compositional bias: polar residues. 4 stretches are compositionally biased toward pro residues: residues 176–193 (APPPPPPGRRANAPPTPL), 222–236 (EGPPAPPPVKPPPSP), 249–262 (APPPPPYRQPPGVP), and 356–378 (RGKPPPPPSRTPAGPPPPPPPPL).

The protein belongs to the verprolin family. As to quaternary structure, interacts with WASL and WASP, and this interaction results in cytoplasmic relocation of these two proteins along actin filaments. Interacts with NCK2 resulting in the localization to sites of focal adhesions. No interaction was seen with WASF2 and WASF3. Expressed mainly in brain, colon, lung and stomach (at protein level). Ubiquitously expressed, with high expression in brain, kidney, lung, and placenta.

Its subcellular location is the cytoplasm. It is found in the cytoskeleton. In terms of biological role, plays an active role in the formation of cell surface protrusions downstream of activated PDGFB receptors. Plays an important role in actin-microspike formation through cooperation with WASL. May cooperate with WASP and WASL to induce mobilization and reorganization of the actin filament system. The sequence is that of WAS/WASL-interacting protein family member 2 (WIPF2) from Homo sapiens (Human).